A 577-amino-acid polypeptide reads, in one-letter code: Laccase-17 (577 aa).

Positions 1–22 (MALQLLLAVFSCVLLLPQPAFG) are cleaved as a signal peptide. 2 consecutive Plastocyanin-like domains span residues 30-146 (EIKM…PKRG) and 156-309 (KEVP…YEPP). Asn-35 and Asn-76 each carry an N-linked (GlcNAc...) asparagine glycan. His-80 and His-82 together coordinate Cu cation. N-linked (GlcNAc...) asparagine glycosylation occurs at Asn-112. Cu cation-binding residues include His-125 and His-127. Asn-185, Asn-201, Asn-237, Asn-297, Asn-335, Asn-383, Asn-391, Asn-401, Asn-437, Asn-444, Asn-450, and Asn-460 each carry an N-linked (GlcNAc...) asparagine glycan. The region spanning 427 to 561 (KFPWSPIVPF…RMAWLVLDGD (135 aa)) is the Plastocyanin-like 3 domain. Residues His-478, His-481, His-483, His-540, Cys-541, His-542, and His-546 each contribute to the Cu cation site.

The protein belongs to the multicopper oxidase family. It depends on Cu cation as a cofactor. As to expression, ubiquitous with higher levels in the inflorescence stem.

The protein localises to the secreted. It localises to the extracellular space. Its subcellular location is the apoplast. It catalyses the reaction 4 hydroquinone + O2 = 4 benzosemiquinone + 2 H2O. Functionally, lignin degradation and detoxification of lignin-derived products. The protein is Laccase-17 (LAC17) of Arabidopsis thaliana (Mouse-ear cress).